The chain runs to 421 residues: uncharacterized protein (421 aa).

4 CBS domains span residues 13-74 (MTKD…VRSL), 74-133 (LMYK…MKDT), 139-195 (MTRN…PKKK), and 217-274 (MNTP…KGAM).

This is an uncharacterized protein from Methanocaldococcus jannaschii (strain ATCC 43067 / DSM 2661 / JAL-1 / JCM 10045 / NBRC 100440) (Methanococcus jannaschii).